The chain runs to 391 residues: Nicotinate phosphoribosyltransferase (391 aa).

A Phosphohistidine; by autocatalysis modification is found at H216.

The protein belongs to the NAPRTase family. Transiently phosphorylated on a His residue during the reaction cycle. Phosphorylation strongly increases the affinity for substrates and increases the rate of nicotinate D-ribonucleotide production. Dephosphorylation regenerates the low-affinity form of the enzyme, leading to product release.

The catalysed reaction is nicotinate + 5-phospho-alpha-D-ribose 1-diphosphate + ATP + H2O = nicotinate beta-D-ribonucleotide + ADP + phosphate + diphosphate. Its pathway is cofactor biosynthesis; NAD(+) biosynthesis; nicotinate D-ribonucleotide from nicotinate: step 1/1. Catalyzes the synthesis of beta-nicotinate D-ribonucleotide from nicotinate and 5-phospho-D-ribose 1-phosphate at the expense of ATP. The chain is Nicotinate phosphoribosyltransferase from Bordetella petrii (strain ATCC BAA-461 / DSM 12804 / CCUG 43448).